The chain runs to 527 residues: ATP synthase subunit alpha (527 aa).

172 to 179 (GDRQTGKT) contacts ATP.

It belongs to the ATPase alpha/beta chains family. F-type ATPases have 2 components, CF(1) - the catalytic core - and CF(0) - the membrane proton channel. CF(1) has five subunits: alpha(3), beta(3), gamma(1), delta(1), epsilon(1). CF(0) has three main subunits: a(1), b(2) and c(9-12). The alpha and beta chains form an alternating ring which encloses part of the gamma chain. CF(1) is attached to CF(0) by a central stalk formed by the gamma and epsilon chains, while a peripheral stalk is formed by the delta and b chains.

Its subcellular location is the cell inner membrane. It catalyses the reaction ATP + H2O + 4 H(+)(in) = ADP + phosphate + 5 H(+)(out). Functionally, produces ATP from ADP in the presence of a proton gradient across the membrane. The alpha chain is a regulatory subunit. The polypeptide is ATP synthase subunit alpha (Bacteroides thetaiotaomicron (strain ATCC 29148 / DSM 2079 / JCM 5827 / CCUG 10774 / NCTC 10582 / VPI-5482 / E50)).